A 193-amino-acid chain; its full sequence is Chromophore lyase CpcS/CpeS 4 (193 aa).

This sequence belongs to the CpcS/CpeS biliprotein lyase family.

In terms of biological role, covalently attaches a chromophore to Cys residue(s) of phycobiliproteins. The polypeptide is Chromophore lyase CpcS/CpeS 4 (Trichodesmium erythraeum (strain IMS101)).